The primary structure comprises 534 residues: Anther-specific proline-rich protein APG (534 aa).

A signal peptide spans 1 to 35 (MKRSSLVDSCSYSRIFRSIFCLLSFCIFFLTTTNA). Residues 59–196 (NPPTPDPSPK…SPKPAPSPPK (138 aa)) show a composition bias toward pro residues. The interval 59–202 (NPPTPDPSPK…SPPKPENKTI (144 aa)) is disordered. Ser-211 (nucleophile) is an active-site residue. Active-site residues include Asp-508 and His-511.

This sequence belongs to the 'GDSL' lipolytic enzyme family. In terms of tissue distribution, found in sporophytic and gametophytic cell types in the anther, only in male fertile plants.

The chain is Anther-specific proline-rich protein APG (APG) from Arabidopsis thaliana (Mouse-ear cress).